A 385-amino-acid polypeptide reads, in one-letter code: Nuclear hormone receptor family member nhr-68 (385 aa).

The segment at residues 4 to 79 is a DNA-binding region (nuclear receptor); the sequence is KEVCLVCQDF…VGMDKTSLQA (76 aa). NR C4-type zinc fingers lie at residues 7–27 and 43–62; these read CLVC…CNGC and CQFD…CRFC. The segment at 81-110 is disordered; the sequence is RDPIGYTKRNKKTLRHPMNELSGDESNSCT. The 240-residue stretch at 145–384 folds into the NR LBD domain; the sequence is PKRSLKQALC…SFAKELIFGD (240 aa). Residues 373–384 are AF-2; that stretch reads FTSFAKELIFGD.

Belongs to the nuclear hormone receptor family.

Its subcellular location is the nucleus. In terms of biological role, probable transcription factor that acts in a feed-forward loop with nhr-10 to activate genes, including itself, involved in the vitamin B12-independent breakdown of the short-chain fatty acid propionate. This pathway is triggered in response to a diet low in vitamin B12, when canonical vitamin B12-dependent propionate breakdown cannot function; the resulting accumulation of propionate is probably sensed by nhr-68 and/or nhr-10. This is Nuclear hormone receptor family member nhr-68 from Caenorhabditis elegans.